Consider the following 71-residue polypeptide: DNA-directed RNA polymerase subunit epsilon (71 aa).

Belongs to the RNA polymerase subunit epsilon family. RNAP is composed of a core of 2 alpha, a beta and a beta' subunit. The core is associated with a delta subunit, and at least one of epsilon or omega. When a sigma factor is associated with the core the holoenzyme is formed, which can initiate transcription.

It carries out the reaction RNA(n) + a ribonucleoside 5'-triphosphate = RNA(n+1) + diphosphate. In terms of biological role, a non-essential component of RNA polymerase (RNAP). The protein is DNA-directed RNA polymerase subunit epsilon of Staphylococcus saprophyticus subsp. saprophyticus (strain ATCC 15305 / DSM 20229 / NCIMB 8711 / NCTC 7292 / S-41).